The following is a 172-amino-acid chain: Shikimate kinase (172 aa).

11–16 (GAGKST) contributes to the ATP binding site. A Mg(2+)-binding site is contributed by Ser15. Residues Asp33, Arg57, and Gly79 each coordinate substrate. Residue Arg117 participates in ATP binding. Residue Arg136 coordinates substrate. Arg153 lines the ATP pocket.

It belongs to the shikimate kinase family. In terms of assembly, monomer. Mg(2+) is required as a cofactor.

Its subcellular location is the cytoplasm. It carries out the reaction shikimate + ATP = 3-phosphoshikimate + ADP + H(+). Its pathway is metabolic intermediate biosynthesis; chorismate biosynthesis; chorismate from D-erythrose 4-phosphate and phosphoenolpyruvate: step 5/7. Catalyzes the specific phosphorylation of the 3-hydroxyl group of shikimic acid using ATP as a cosubstrate. The sequence is that of Shikimate kinase from Pseudomonas paraeruginosa (strain DSM 24068 / PA7) (Pseudomonas aeruginosa (strain PA7)).